The chain runs to 338 residues: 4-hydroxy-3-methylbut-2-enyl diphosphate reductase (338 aa).

Residue C21 participates in [4Fe-4S] cluster binding. (2E)-4-hydroxy-3-methylbut-2-enyl diphosphate is bound by residues H50 and H83. Dimethylallyl diphosphate is bound by residues H50 and H83. Residues H50 and H83 each contribute to the isopentenyl diphosphate site. [4Fe-4S] cluster is bound at residue C105. H133 provides a ligand contact to (2E)-4-hydroxy-3-methylbut-2-enyl diphosphate. H133 provides a ligand contact to dimethylallyl diphosphate. H133 contacts isopentenyl diphosphate. E135 (proton donor) is an active-site residue. Position 173 (T173) interacts with (2E)-4-hydroxy-3-methylbut-2-enyl diphosphate. C203 provides a ligand contact to [4Fe-4S] cluster. (2E)-4-hydroxy-3-methylbut-2-enyl diphosphate-binding residues include S231, S232, N233, and S276. Dimethylallyl diphosphate is bound by residues S231, S232, N233, and S276. Isopentenyl diphosphate-binding residues include S231, S232, N233, and S276.

The protein belongs to the IspH family. The cofactor is [4Fe-4S] cluster.

It carries out the reaction isopentenyl diphosphate + 2 oxidized [2Fe-2S]-[ferredoxin] + H2O = (2E)-4-hydroxy-3-methylbut-2-enyl diphosphate + 2 reduced [2Fe-2S]-[ferredoxin] + 2 H(+). The enzyme catalyses dimethylallyl diphosphate + 2 oxidized [2Fe-2S]-[ferredoxin] + H2O = (2E)-4-hydroxy-3-methylbut-2-enyl diphosphate + 2 reduced [2Fe-2S]-[ferredoxin] + 2 H(+). It participates in isoprenoid biosynthesis; dimethylallyl diphosphate biosynthesis; dimethylallyl diphosphate from (2E)-4-hydroxy-3-methylbutenyl diphosphate: step 1/1. Its pathway is isoprenoid biosynthesis; isopentenyl diphosphate biosynthesis via DXP pathway; isopentenyl diphosphate from 1-deoxy-D-xylulose 5-phosphate: step 6/6. Its function is as follows. Catalyzes the conversion of 1-hydroxy-2-methyl-2-(E)-butenyl 4-diphosphate (HMBPP) into a mixture of isopentenyl diphosphate (IPP) and dimethylallyl diphosphate (DMAPP). Acts in the terminal step of the DOXP/MEP pathway for isoprenoid precursor biosynthesis. The chain is 4-hydroxy-3-methylbut-2-enyl diphosphate reductase from Streptomyces avermitilis (strain ATCC 31267 / DSM 46492 / JCM 5070 / NBRC 14893 / NCIMB 12804 / NRRL 8165 / MA-4680).